Here is an 88-residue protein sequence, read N- to C-terminus: UPF0223 protein OB1419 (88 aa).

Belongs to the UPF0223 family.

The polypeptide is UPF0223 protein OB1419 (Oceanobacillus iheyensis (strain DSM 14371 / CIP 107618 / JCM 11309 / KCTC 3954 / HTE831)).